Consider the following 379-residue polypeptide: Cytochrome b (379 aa).

The next 4 helical transmembrane spans lie at 33–53, 77–98, 113–133, and 178–198; these read FGSLLGLCLIIQIASGLFLDM, WLIRYIHANGASLFFVCLYLHI, WNIGIILLFLTMATAFMGYVL, and FFAFHFILPFIIAAMAMVHLL. 2 residues coordinate heme b: His83 and His97. Heme b-binding residues include His182 and His196. His201 is an a ubiquinone binding site. A run of 4 helical transmembrane segments spans residues 226–246, 288–308, 320–340, and 347–367; these read TKDFLGIVLLLTFFFTMVPFF, LGGVIALILSILILALLPHIQ, ISQFLFWLLVSDVLVLTWIGG, and FIIIGQIASLSYFTIILVLMP.

Belongs to the cytochrome b family. As to quaternary structure, the cytochrome bc1 complex contains 11 subunits: 3 respiratory subunits (MT-CYB, CYC1 and UQCRFS1), 2 core proteins (UQCRC1 and UQCRC2) and 6 low-molecular weight proteins (UQCRH/QCR6, UQCRB/QCR7, UQCRQ/QCR8, UQCR10/QCR9, UQCR11/QCR10 and a cleavage product of UQCRFS1). This cytochrome bc1 complex then forms a dimer. It depends on heme b as a cofactor.

The protein localises to the mitochondrion inner membrane. Component of the ubiquinol-cytochrome c reductase complex (complex III or cytochrome b-c1 complex) that is part of the mitochondrial respiratory chain. The b-c1 complex mediates electron transfer from ubiquinol to cytochrome c. Contributes to the generation of a proton gradient across the mitochondrial membrane that is then used for ATP synthesis. In Dipodomys nelsoni (Nelson's kangaroo rat), this protein is Cytochrome b (MT-CYB).